A 550-amino-acid chain; its full sequence is Tether containing UBX domain for GLUT4 (550 aa).

Alanine 2 is modified (N-acetylalanine). The tract at residues 185 to 320 (AVRSKAPGSP…EPPVDRDPVV (136 aa)) is disordered. The residue at position 193 (serine 193) is a Phosphoserine. Positions 193–206 (SPVSSLSADQASSS) are enriched in low complexity. Over residues 217–226 (SRGDLNHEGD) the composition is skewed to basic and acidic residues. The span at 242 to 252 (DAQTKQSTSEP) shows a compositional bias: polar residues. Residues 313–376 (PVDRDPVVYH…LVTKAFREAQ (64 aa)) are interaction with GLUT4. The region spanning 382-458 (ERYPKVALRV…NLFPAALVHF (77 aa)) is the UBX domain. Position 496 is a phosphoserine (serine 496). Positions 496-550 (SPPLLPAPDPVSLESEPIAEDGALGPPEPIQGTAQPVKRSLGKVPKWLKLPASKR) are disordered.

In terms of assembly, interacts with VCP. Interacts with VCPKMT. Interacts with GLUT4. As to expression, ubiquitous.

It is found in the endomembrane system. Its subcellular location is the endoplasmic reticulum-Golgi intermediate compartment membrane. The protein localises to the cytoplasm. It localises to the nucleus. Its function is as follows. Enhances VCP methylation catalyzed by VCPKMT. Tethering protein that sequesters GLUT4-containing vesicles in the cytoplasm in the absence of insulin. Modulates the amount of GLUT4 that is available at the cell surface. In Mus musculus (Mouse), this protein is Tether containing UBX domain for GLUT4 (Aspscr1).